A 291-amino-acid chain; its full sequence is Transmembrane protein 41B (291 aa).

Residues 1 to 11 show a composition bias toward basic and acidic residues; sequence MAKGRVADRSP. Residues 1-43 are disordered; it reads MAKGRVADRSPTEMLHSTPAGDRAVRTQGSAAPGSKDHLNEKP. Position 18 is a phosphothreonine (Thr18). At Ser35 the chain carries Phosphoserine. The next 6 helical transmembrane spans lie at 52-72, 109-129, 147-169, 197-217, 225-245, and 262-282; these read TSLL…FLVY, FYVQ…TFAI, LALF…LSYL, LINY…FINI, PLKV…FVAI, and SWSS…PAIF. Residues 140 to 251 form a VTT domain; required for its function in autophagy region; that stretch reads GFLYPFPLAL…FVAIKAGTTL (112 aa).

It belongs to the TMEM41 family. In terms of assembly, interacts with VMP1. Interacts with COPA, COPB1, VDAC1 and ERLIN2. Interacts with ATG2A. Interacts with SURF4. Expressed in brain, spinal cord, kidney and first lumbar dorsal root ganglia during postnatal development. Expressed in motor neurons and proprioceptive neurons.

It localises to the endoplasmic reticulum membrane. The protein resides in the endomembrane system. The catalysed reaction is a 1,2-diacyl-sn-glycero-3-phospho-L-serine(in) = a 1,2-diacyl-sn-glycero-3-phospho-L-serine(out). It carries out the reaction cholesterol(in) = cholesterol(out). It catalyses the reaction a 1,2-diacyl-sn-glycero-3-phosphocholine(in) = a 1,2-diacyl-sn-glycero-3-phosphocholine(out). The enzyme catalyses a 1,2-diacyl-sn-glycero-3-phosphoethanolamine(in) = a 1,2-diacyl-sn-glycero-3-phosphoethanolamine(out). Phospholipid scramblase involved in lipid homeostasis and membrane dynamics processes. Has phospholipid scramblase activity toward cholesterol and phosphatidylserine, as well as phosphatidylethanolamine and phosphatidylcholine. Required for autophagosome formation: participates in early stages of autophagosome biogenesis at the endoplasmic reticulum (ER) membrane by reequilibrating the leaflets of the ER as lipids are extracted by ATG2 (ATG2A or ATG2B) to mediate autophagosome assembly. In addition to autophagy, involved in other processes in which phospholipid scramblase activity is required. Required for normal motor neuron development. This chain is Transmembrane protein 41B, found in Mus musculus (Mouse).